Here is a 260-residue protein sequence, read N- to C-terminus: Shikimate dehydrogenase (NADP(+)) (260 aa).

Shikimate is bound by residues 14-16 (SAS) and Thr60. The active-site Proton acceptor is the Lys64. Asn85 and Asp100 together coordinate shikimate. NADP(+) is bound by residues 121-125 (GAGGA), 145-150 (NRTYER), and Phe201. Tyr203 lines the shikimate pocket. Position 225 (Gly225) interacts with NADP(+).

Belongs to the shikimate dehydrogenase family. In terms of assembly, homodimer.

The enzyme catalyses shikimate + NADP(+) = 3-dehydroshikimate + NADPH + H(+). It functions in the pathway metabolic intermediate biosynthesis; chorismate biosynthesis; chorismate from D-erythrose 4-phosphate and phosphoenolpyruvate: step 4/7. Its function is as follows. Involved in the biosynthesis of the chorismate, which leads to the biosynthesis of aromatic amino acids. Catalyzes the reversible NADPH linked reduction of 3-dehydroshikimate (DHSA) to yield shikimate (SA). The polypeptide is Shikimate dehydrogenase (NADP(+)) (Pyrobaculum islandicum (strain DSM 4184 / JCM 9189 / GEO3)).